The following is a 288-amino-acid chain: Ion-translocating oxidoreductase complex subunit D (288 aa).

9 helical membrane passes run 26 to 46 (IVALLPISAAAVYFFGFAALG), 47 to 67 (NIIASILGAVGIEFVIQKAFN), 80 to 100 (LGLLLALICPPTLPAWMIFIG), 101 to 121 (GAFAVGVGKHAFGGIGSYTFH), 126 to 146 (AWVFLSLAWAQDMLPGTIPIL), 159 to 179 (GFLTDVSPILVLLAGVILILV), 200 to 220 (VLGDPLAYVVSGTFLLGVFFI), 235 to 255 (IVYGILCGFLTVIYGYFSGNY), and 256 to 276 (VWGTLYALLLSNAVAPFIELK).

The protein belongs to the NqrB/RnfD family. In terms of assembly, the Rnf complex is probably composed of eight subunits, including RnfA, RnfB, RnfC, RnfD, RnfE and RnfG. The cofactor is FMN.

Its subcellular location is the cell membrane. Functionally, part of a membrane-bound complex that couples electron transfer with translocation of ions across the membrane. Catalyzes Na(+) transport, most probably coupled to electron transfer from reduced ferredoxin to methanophenazine and heterodisulfide reductase. Involved in heterodisulfide reduction during methanogenesis from acetate. The sequence is that of Ion-translocating oxidoreductase complex subunit D from Methanosarcina acetivorans (strain ATCC 35395 / DSM 2834 / JCM 12185 / C2A).